The primary structure comprises 164 residues: Phosphopantetheine adenylyltransferase (164 aa).

Thr-9 serves as a coordination point for substrate. ATP-binding positions include 9-10 and His-17; that span reads TF. Residues Lys-41, Thr-76, and Arg-90 each coordinate substrate. Residues 91–93, Glu-101, and 126–132 contribute to the ATP site; these read GLR and YQFVSSS.

Belongs to the bacterial CoaD family. In terms of assembly, homohexamer. It depends on Mg(2+) as a cofactor.

The protein resides in the cytoplasm. The catalysed reaction is (R)-4'-phosphopantetheine + ATP + H(+) = 3'-dephospho-CoA + diphosphate. The protein operates within cofactor biosynthesis; coenzyme A biosynthesis; CoA from (R)-pantothenate: step 4/5. Functionally, reversibly transfers an adenylyl group from ATP to 4'-phosphopantetheine, yielding dephospho-CoA (dPCoA) and pyrophosphate. This Coprothermobacter proteolyticus (strain ATCC 35245 / DSM 5265 / OCM 4 / BT) protein is Phosphopantetheine adenylyltransferase.